Here is a 190-residue protein sequence, read N- to C-terminus: Elongation factor P 2 (190 aa).

Belongs to the elongation factor P family.

It localises to the cytoplasm. Its pathway is protein biosynthesis; polypeptide chain elongation. In terms of biological role, involved in peptide bond synthesis. Stimulates efficient translation and peptide-bond synthesis on native or reconstituted 70S ribosomes in vitro. Probably functions indirectly by altering the affinity of the ribosome for aminoacyl-tRNA, thus increasing their reactivity as acceptors for peptidyl transferase. The polypeptide is Elongation factor P 2 (efp2) (Chlamydia muridarum (strain MoPn / Nigg)).